Reading from the N-terminus, the 110-residue chain is Protein YcgL (110 aa).

Positions 14–98 (MFCVIYRSSK…PPEDLLKQHL (85 aa)) constitute a YcgL domain.

This chain is Protein YcgL, found in Salmonella arizonae (strain ATCC BAA-731 / CDC346-86 / RSK2980).